The following is a 136-amino-acid chain: Phosphoribosyl-AMP cyclohydrolase (136 aa).

A Mg(2+)-binding site is contributed by D92. A Zn(2+)-binding site is contributed by C93. Mg(2+)-binding residues include D94 and D96. Zn(2+) is bound by residues C109 and C116.

This sequence belongs to the PRA-CH family. As to quaternary structure, homodimer. Mg(2+) is required as a cofactor. The cofactor is Zn(2+).

It localises to the cytoplasm. It catalyses the reaction 1-(5-phospho-beta-D-ribosyl)-5'-AMP + H2O = 1-(5-phospho-beta-D-ribosyl)-5-[(5-phospho-beta-D-ribosylamino)methylideneamino]imidazole-4-carboxamide. It functions in the pathway amino-acid biosynthesis; L-histidine biosynthesis; L-histidine from 5-phospho-alpha-D-ribose 1-diphosphate: step 3/9. Reversibly inhibited by EDTA and free zinc ions. Enzyme is inactivated by dialysis against 1,10-phenanthroline, which is a zinc specific chelator. Its function is as follows. Catalyzes the hydrolysis of the adenine ring of phosphoribosyl-AMP. This Methanococcus vannielii protein is Phosphoribosyl-AMP cyclohydrolase.